The chain runs to 553 residues: Flotillin family inner membrane protein YqiK (553 aa).

The Periplasmic portion of the chain corresponds to 1-9 (MDDIVNSVP). A helical transmembrane segment spans residues 10–30 (SWMFTAIIAVCILFIIGIIFA). Residues 31-553 (RLYRRASAEQ…STTPVEEKAE (523 aa)) lie on the Cytoplasmic side of the membrane.

The protein belongs to the band 7/mec-2 family. Flotillin subfamily. Homooligomerizes.

It is found in the cell inner membrane. The protein localises to the membrane raft. Its function is as follows. Found in membrane microdomains that may be equivalent to eukaryotic membrane rafts. FMMs are highly dynamic and increase in number as cells age. Flotillins are thought to be important factors in membrane fluidity. This chain is Flotillin family inner membrane protein YqiK (yqiK), found in Escherichia coli (strain K12).